A 237-amino-acid polypeptide reads, in one-letter code: NAD-dependent protein deacetylase (237 aa).

Residues 1–237 (MLTTWLTEAK…LEETNRALQA (237 aa)) form the Deacetylase sirtuin-type domain. Alanine 18, threonine 22, phenylalanine 29, arginine 30, glutamine 95, aspartate 98, and histidine 113 together coordinate NAD(+). Phenylalanine 29 is a nicotinamide binding site. Aspartate 98 is a nicotinamide binding site. Residue histidine 113 is the Proton acceptor of the active site. Zn(2+)-binding residues include cysteine 121, cysteine 124, cysteine 140, and cysteine 142. Serine 180, serine 181, asparagine 205, and isoleucine 224 together coordinate NAD(+).

The protein belongs to the sirtuin family. Class U subfamily. Requires Zn(2+) as cofactor.

The protein localises to the cytoplasm. It carries out the reaction N(6)-acetyl-L-lysyl-[protein] + NAD(+) + H2O = 2''-O-acetyl-ADP-D-ribose + nicotinamide + L-lysyl-[protein]. Its function is as follows. NAD-dependent protein deacetylase which modulates the activities of several enzymes which are inactive in their acetylated form. In Halalkalibacterium halodurans (strain ATCC BAA-125 / DSM 18197 / FERM 7344 / JCM 9153 / C-125) (Bacillus halodurans), this protein is NAD-dependent protein deacetylase.